An 815-amino-acid chain; its full sequence is Phosphatidylinositol 4-phosphate 5-kinase 9 (815 aa).

MORN repeat units follow at residues tyrosine 58–valine 80, tyrosine 81–serine 103, tyrosine 104–threonine 126, tyrosine 127–valine 149, phenylalanine 150–valine 172, tyrosine 173–serine 195, tyrosine 196–cysteine 218, and tyrosine 219–arginine 240. One can recognise a PIPK domain in the interval glycine 391–phenylalanine 809. The tract at residues tyrosine 769–serine 790 is activation loop.

As to quaternary structure, interacts with CINV1. Widely expressed.

The protein resides in the membrane. The protein localises to the nucleus. It carries out the reaction a 1,2-diacyl-sn-glycero-3-phospho-(1D-myo-inositol 4-phosphate) + ATP = a 1,2-diacyl-sn-glycero-3-phospho-(1D-myo-inositol-4,5-bisphosphate) + ADP + H(+). Plays a role in sugar-mediated root development. Interaction with CINV1 induces repression of CINV1 activity and negative regulation of sugar-mediated root cell elongation. This chain is Phosphatidylinositol 4-phosphate 5-kinase 9 (PIP5K9), found in Arabidopsis thaliana (Mouse-ear cress).